Here is a 185-residue protein sequence, read N- to C-terminus: Ribosome-recycling factor (185 aa).

It belongs to the RRF family.

The protein resides in the cytoplasm. Functionally, responsible for the release of ribosomes from messenger RNA at the termination of protein biosynthesis. May increase the efficiency of translation by recycling ribosomes from one round of translation to another. In Wigglesworthia glossinidia brevipalpis, this protein is Ribosome-recycling factor.